Consider the following 205-residue polypeptide: MIGKLKGLIDSYAEDFVILDVGGVGYQVHCSARTLQALPSPGEAATLSIETYVREDQIKLFGFRSDVEREWFRLLQTVQGVGAKVALAVLGTLPPADLANAIALRDKAAVARTPGVGPKVAERIVTELKDKAPAFADVDPGVIRLSGAIEDSRAPQPIADAISALINLGYGQPQAAAAIAAASRAAGDKAETAQLIRLGLKELAK.

A domain I region spans residues 1–64; the sequence is MIGKLKGLID…EDQIKLFGFR (64 aa). The domain II stretch occupies residues 65 to 143; sequence SDVEREWFRL…AFADVDPGVI (79 aa). The flexible linker stretch occupies residues 144 to 154; the sequence is RLSGAIEDSRA. The interval 154 to 205 is domain III; it reads APQPIADAISALINLGYGQPQAAAAIAAASRAAGDKAETAQLIRLGLKELAK.

Belongs to the RuvA family. Homotetramer. Forms an RuvA(8)-RuvB(12)-Holliday junction (HJ) complex. HJ DNA is sandwiched between 2 RuvA tetramers; dsDNA enters through RuvA and exits via RuvB. An RuvB hexamer assembles on each DNA strand where it exits the tetramer. Each RuvB hexamer is contacted by two RuvA subunits (via domain III) on 2 adjacent RuvB subunits; this complex drives branch migration. In the full resolvosome a probable DNA-RuvA(4)-RuvB(12)-RuvC(2) complex forms which resolves the HJ.

The protein localises to the cytoplasm. Its function is as follows. The RuvA-RuvB-RuvC complex processes Holliday junction (HJ) DNA during genetic recombination and DNA repair, while the RuvA-RuvB complex plays an important role in the rescue of blocked DNA replication forks via replication fork reversal (RFR). RuvA specifically binds to HJ cruciform DNA, conferring on it an open structure. The RuvB hexamer acts as an ATP-dependent pump, pulling dsDNA into and through the RuvAB complex. HJ branch migration allows RuvC to scan DNA until it finds its consensus sequence, where it cleaves and resolves the cruciform DNA. The protein is Holliday junction branch migration complex subunit RuvA of Bradyrhizobium sp. (strain BTAi1 / ATCC BAA-1182).